The following is an 83-amino-acid chain: SQIKFKPSYIELAVVADHGMFTKYNSNINTIRIVHEMVNTVDGFFRTITSFGEWRERDIIPRSCIMASTISKHNPQCIINQPI.

Residues 8–83 (SYIELAVVAD…NPQCIINQPI (76 aa)) form the Peptidase M12B domain. The Ca(2+) site is built by Glu11, Cys77, and Asn80.

This sequence belongs to the venom metalloproteinase (M12B) family. P-I subfamily. As to quaternary structure, monomer. Zn(2+) serves as cofactor. In terms of tissue distribution, expressed by the venom gland.

It localises to the secreted. With respect to regulation, inhibited by EDTA. This protein is a zinc protease from snake venom that is devoid of significant myotoxic and hemorrhagic activities. It hydrolyzes the Aalpha-chain and more slowly the Bbeta-chain of fibrin and fibrinogen, without affecting the gamma-chains. It induces cell detachment and a apoptosis (anoikis) in endothelial cells. This Bothrops pauloensis (Neuwied's lancehead) protein is Snake venom metalloproteinase BnP1.